Consider the following 233-residue polypeptide: Thrombin-like enzyme elegaxobin-2 (233 aa).

One can recognise a Peptidase S1 domain in the interval 1–224 (VIGGDECNIN…HLDWIKGIIA (224 aa)). Intrachain disulfides connect cysteine 7–cysteine 138, cysteine 25–cysteine 41, cysteine 73–cysteine 231, cysteine 117–cysteine 185, cysteine 149–cysteine 164, and cysteine 175–cysteine 200. Histidine 40 functions as the Charge relay system in the catalytic mechanism. N-linked (GlcNAc...) asparagine glycosylation is present at asparagine 78. Aspartate 85 acts as the Charge relay system in catalysis. The Charge relay system role is filled by serine 179.

This sequence belongs to the peptidase S1 family. Snake venom subfamily. As to quaternary structure, monomer. In terms of tissue distribution, expressed by the venom gland.

The protein resides in the secreted. Functionally, thrombin-like snake venom serine protease that clots rabbit fibrinogen. Only the beta chain of fibrinogen (FGB) is cleaved, releasing fibrinopeptide B. Human and bovine fibrinogen are unaffected. Also cleaves Met-Lys and Arg-Ser bonds in heat-denatured bovine plasma kininogen to release Lys-bradykinin. This chain is Thrombin-like enzyme elegaxobin-2, found in Protobothrops elegans (Elegant pitviper).